The primary structure comprises 507 residues: Transcription factor SOX-9 (507 aa).

Disordered stretches follow at residues 1–67 (MNLL…SEED) and 160–250 (RLRV…AGKV). A compositionally biased stretch (low complexity) spans 30-41 (SAGSPCPSGSGS). Residues 42 to 52 (DTENTRPQENT) are compositionally biased toward polar residues. Composition is skewed to basic and acidic residues over residues 56-67 (GEPDLKKESEED) and 160-174 (RLRV…DYKY). The dimerization (DIM) stretch occupies residues 63 to 103 (ESEEDKFPVCIREAVSQVLKGYDWTLVPMPVRVNGSSKNKP). A PQA region spans residues 63-103 (ESEEDKFPVCIREAVSQVLKGYDWTLVPMPVRVNGSSKNKP). Position 64 is a phosphoserine; by PKA (S64). Positions 105–173 (VKRPMNAFMV…QHKKDHPDYK (69 aa)) form a DNA-binding region, HMG box. S211 carries the phosphoserine; by PKA modification. The transactivation domain (TAM) stretch occupies residues 224 to 307 (PGEHSGQSQG…LPPNGHPGVP (84 aa)). 2 short sequence motifs (9aaTAD) span residues 275-284 (IGELSSDVIS) and 290-298 (DVNEFDQYL). The interval 335-429 (WMSKQQAPPP…PFNLPHYSPS (95 aa)) is disordered. Pro residues predominate over residues 341–369 (APPPPPQQPPQAPQAPQAPPQQQAPPQQP). Residues 378–420 (HTLTTLSSEPGQSQRTHIKTEQLSPSHYSEQQQHSPQQISYSP) are compositionally biased toward polar residues. The interval 392-507 (RTHIKTEQLS…QPVYTQLTRP (116 aa)) is transactivation domain (TAC). K396 is covalently cross-linked (Glycyl lysine isopeptide (Lys-Gly) (interchain with G-Cter in ubiquitin)). The short motif at 458-466 (SGLYSTFTY) is the 9aaTAD 3 element. The segment at 477 to 507 (PIADTSGVPSIPQTHSPQHWEQPVYTQLTRP) is disordered. Positions 483–507 (GVPSIPQTHSPQHWEQPVYTQLTRP) are enriched in polar residues.

Homodimer; homodimerization is required for activity. Interacts (via C-terminus) with ZNF219; forming a complex that binds to the COL2A1 promoter and activates COL2A1 expression. Interacts with DDRGK1. Interacts with EP300/p300. Interacts with beta-catenin (CTNNB1); inhibiting CTNNB1 activity by competing with the binding sites of TCF/LEF within CTNNB1. Post-translationally, acetylated; acetylation impairs nuclear localization and ability to transactivate expression of target genes. Deacetylated by SIRT1. In terms of processing, phosphorylation at Ser-64 and Ser-211 by PKA increases transcriptional activity and may help delay chondrocyte maturation downstream of PTHLH/PTHrP signaling. Phosphorylation at either Ser-64 or Ser-211 is required for sumoylation, but phosphorylation is not dependent on sumoylation. Phosphorylated on tyrosine residues; tyrosine dephosphorylation by PTPN11/SHP2 blocks SOX9 phosphorylation by PKA and subsequent SUMOylation. Sumoylated; phosphorylation at either Ser-64 or Ser-211 is required for sumoylation. Sumoylation is induced by BMP signaling pathway. Post-translationally, ubiquitinated; ubiquitination leads to proteasomal degradation and is negatively regulated by DDRGK1. As to expression, expressed in the intestinal epithelium (at protein level). Expressed in progenitor cells in various organs, including chondroprogenitors, osteoprogenitors and preadipocytes, but is not expressed in most differentiated cell types such as osteoblasts and adipocytes, with the exception of chondrocytes. Highly expressed in developing chondrogenic tissues. Also expressed in some non-chondrogenic tissues such as notochord, otic vesicle and neural tube.

Its subcellular location is the nucleus. In terms of biological role, transcription factor that plays a key role in chondrocytes differentiation and skeletal development. Specifically binds the 5'-ACAAAG-3' DNA motif present in enhancers and super-enhancers and promotes expression of genes important for chondrogenesis, including cartilage matrix protein-coding genes COL2A1, COL4A2, COL9A1, COL11A2 and ACAN, SOX5 and SOX6. Also binds to some promoter regions. Plays a central role in successive steps of chondrocyte differentiation. Absolutely required for precartilaginous condensation, the first step in chondrogenesis during which skeletal progenitors differentiate into prechondrocytes. Together with SOX5 and SOX6, required for overt chondrogenesis when condensed prechondrocytes differentiate into early stage chondrocytes, the second step in chondrogenesis. Later, required to direct hypertrophic maturation and block osteoblast differentiation of growth plate chondrocytes: maintains chondrocyte columnar proliferation, delays prehypertrophy and then prevents osteoblastic differentiation of chondrocytes by lowering beta-catenin (CTNNB1) signaling and RUNX2 expression. Also required for chondrocyte hypertrophy, both indirectly, by keeping the lineage fate of chondrocytes, and directly, by remaining present in upper hypertrophic cells and transactivating COL10A1 along with MEF2C. Low lipid levels are the main nutritional determinant for chondrogenic commitment of skeletal progenitor cells: when lipids levels are low, FOXO (FOXO1 and FOXO3) transcription factors promote expression of SOX9, which induces chondrogenic commitment and suppresses fatty acid oxidation. Mechanistically, helps, but is not required, to remove epigenetic signatures of transcriptional repression and deposit active promoter and enhancer marks at chondrocyte-specific genes. Acts in cooperation with the Hedgehog pathway-dependent GLI (GLI1 and GLI3) transcription factors. In addition to cartilage development, also acts as a regulator of proliferation and differentiation in epithelial stem/progenitor cells: involved in the lung epithelium during branching morphogenesis, by balancing proliferation and differentiation and regulating the extracellular matrix. Controls epithelial branching during kidney development. This Mus musculus (Mouse) protein is Transcription factor SOX-9.